The sequence spans 320 residues: Tryptophan--tRNA ligase (320 aa).

Residues 8 to 10 (QPT) and 16 to 17 (GN) each bind ATP. Positions 9–17 (PTGRPHWGN) match the 'HIGH' region motif. Position 131 (aspartate 131) interacts with L-tryptophan. ATP contacts are provided by residues 143 to 145 (GVD), valine 182, and 189 to 193 (KMSKS). Residues 189-193 (KMSKS) carry the 'KMSKS' region motif.

The protein belongs to the class-I aminoacyl-tRNA synthetase family. In terms of assembly, homodimer.

It is found in the cytoplasm. It catalyses the reaction tRNA(Trp) + L-tryptophan + ATP = L-tryptophyl-tRNA(Trp) + AMP + diphosphate + H(+). In terms of biological role, catalyzes the attachment of tryptophan to tRNA(Trp). The chain is Tryptophan--tRNA ligase from Rhodopirellula baltica (strain DSM 10527 / NCIMB 13988 / SH1).